The chain runs to 774 residues: Formin-like protein 13 (774 aa).

The first 22 residues, 1-22 (MRRRVALSTAIALLVGAQLCVA), serve as a signal peptide directing secretion. Residues 51–67 (PPPPMSGSEAVPPPPPA) are compositionally biased toward pro residues. A disordered region spans residues 51 to 78 (PPPPMSGSEAVPPPPPAAAASATTGGGR). The segment covering 68–78 (AAASATTGGGR) has biased composition (low complexity). Residues 89-109 (IALSAGLVALAVASYSCCLLL) traverse the membrane as a helical segment. 4 disordered regions span residues 130-163 (AAAA…DAIY), 176-338 (HEKS…HLKP), 374-402 (FLNS…RRLL), and 740-774 (GSGK…SSSS). A compositionally biased stretch (pro residues) spans 194–216 (DLRPLPPLKRPESQPPPPPPSTP). Over residues 242–261 (SSFSRSTSQHSTLEQTAMPP) the composition is skewed to low complexity. Pro residues predominate over residues 262–286 (MAAPAPPQTNPPRPVRPPPPPPPPR). Residues 326 to 749 (GAARPPKPPH…GSGKSFRVPA (424 aa)) enclose the FH2 domain.

This sequence belongs to the formin-like family. Class-I subfamily.

Its subcellular location is the membrane. This Oryza sativa subsp. japonica (Rice) protein is Formin-like protein 13 (FH13).